A 274-amino-acid chain; its full sequence is Serine/threonine-protein kinase 1 (274 aa).

The Protein kinase domain occupies 16–273; sequence AVLAPKVVNG…HSFLASRHDY (258 aa). ATP is bound by residues 22-30 and lysine 46; that span reads VVNGRFGKM. Aspartate 134 (proton acceptor) is an active-site residue.

This sequence belongs to the protein kinase superfamily. Ser/Thr protein kinase family.

It carries out the reaction L-seryl-[protein] + ATP = O-phospho-L-seryl-[protein] + ADP + H(+). It catalyses the reaction L-threonyl-[protein] + ATP = O-phospho-L-threonyl-[protein] + ADP + H(+). In Orgyia pseudotsugata multicapsid polyhedrosis virus (OpMNPV), this protein is Serine/threonine-protein kinase 1 (PK1).